A 309-amino-acid polypeptide reads, in one-letter code: Porphobilinogen deaminase (309 aa).

Cys-241 bears the S-(dipyrrolylmethanemethyl)cysteine mark.

Belongs to the HMBS family. As to quaternary structure, monomer. Requires dipyrromethane as cofactor.

The enzyme catalyses 4 porphobilinogen + H2O = hydroxymethylbilane + 4 NH4(+). Its pathway is porphyrin-containing compound metabolism; protoporphyrin-IX biosynthesis; coproporphyrinogen-III from 5-aminolevulinate: step 2/4. Its function is as follows. Tetrapolymerization of the monopyrrole PBG into the hydroxymethylbilane pre-uroporphyrinogen in several discrete steps. In Bacillus cereus (strain AH820), this protein is Porphobilinogen deaminase.